A 92-amino-acid chain; its full sequence is SPbeta prophage-derived uncharacterized protein YopY (92 aa).

The sequence is that of SPbeta prophage-derived uncharacterized protein YopY (yopY) from Bacillus subtilis (strain 168).